The primary structure comprises 364 residues: MSHNSFGHLFRVTTWGESHGLALGCVVDGCPPGITFTEAEIQSFLDKRKPGQSKYTTQRREPDQVRVLSGVLLGEDGVTMTTTGTPISMMIENTDQRSKDYGEIARQYRPGHADYAYDVKYGIRDYRGGGRSSARETAARVAAGAIARKVVPGLEVRGALVSIGAHDIDRSRWNWAEVDNNPFFTPDAGSVEVFADYLDGIRKNGSSVGAIIEIVAEGVPAGIGAPIYGKLDQDIASYLMSINAVKGVEIGNGFEAARLTGEENADEMRMGNDGKPIFLSNHAGGVLGGIATGAPVVARFAVKPTSSILTPRRSINKDGNEVDVMTRGRHDPCVGIRAVPIGEAMVACAIADHYLRHRGQTGRV.

Arg-48 serves as a coordination point for NADP(+). Residues 131 to 133 (RSS), 243 to 244 (NA), Gly-288, 303 to 307 (KPTSS), and Arg-329 each bind FMN.

Belongs to the chorismate synthase family. In terms of assembly, homotetramer. The cofactor is FMNH2.

The catalysed reaction is 5-O-(1-carboxyvinyl)-3-phosphoshikimate = chorismate + phosphate. It participates in metabolic intermediate biosynthesis; chorismate biosynthesis; chorismate from D-erythrose 4-phosphate and phosphoenolpyruvate: step 7/7. In terms of biological role, catalyzes the anti-1,4-elimination of the C-3 phosphate and the C-6 proR hydrogen from 5-enolpyruvylshikimate-3-phosphate (EPSP) to yield chorismate, which is the branch point compound that serves as the starting substrate for the three terminal pathways of aromatic amino acid biosynthesis. This reaction introduces a second double bond into the aromatic ring system. This Brucella melitensis biotype 2 (strain ATCC 23457) protein is Chorismate synthase.